A 399-amino-acid polypeptide reads, in one-letter code: Glucosamine kinase (399 aa).

ATP is bound by residues Lys-98, 149–151 (EYL), and Asp-156. Asp-262 contacts D-glucosamine. Mg(2+) is bound by residues Gln-267, Asp-279, and Asp-281. A Substrate specificity determinant motif motif is present at residues 366 to 381 (QVLREIIYAARHLPRW). Residue Glu-370 coordinates D-glucosamine.

It belongs to the actinobacterial glucosamine kinase family. Monomer. Requires Mg(2+) as cofactor.

It carries out the reaction D-glucosamine + ATP = D-glucosamine 6-phosphate + ADP + H(+). Its function is as follows. Catalyzes the ATP-dependent phosphorylation of D-glucosamine (GlcN) to D-glucosamine 6-phosphate. May be involved in the phosphorylation of acquired extracellular GlcN derived from the hydrolysis of chitosan, i.e., in the incorporation of exogenous GlcN into the bacterial GlcNAc metabolism. Is unable to phosphorylate maltose. The sequence is that of Glucosamine kinase from Mycolicibacterium smegmatis (strain ATCC 700084 / mc(2)155) (Mycobacterium smegmatis).